Reading from the N-terminus, the 214-residue chain is Ependymin (214 aa).

Residues 1-20 form the signal peptide; the sequence is MHTVKLLCVVFSCLCAVAWA. 2 N-linked (GlcNAc...) asparagine glycosylation sites follow: Asn70 and Asn93.

The protein belongs to the ependymin family. As to quaternary structure, forms disulfide-linked dimers. In terms of processing, binds calcium through the terminal sialic acids.

The protein localises to the secreted. May play a role in neural plasticity. May be involved during axon regeneration. The sequence is that of Ependymin (epd) from Notemigonus crysoleucas (Golden shiner).